A 115-amino-acid chain; its full sequence is NAD(P)H-quinone oxidoreductase subunit M (115 aa).

The protein belongs to the complex I NdhM subunit family. As to quaternary structure, NDH-1 can be composed of about 15 different subunits; different subcomplexes with different compositions have been identified which probably have different functions.

It localises to the cellular thylakoid membrane. It carries out the reaction a plastoquinone + NADH + (n+1) H(+)(in) = a plastoquinol + NAD(+) + n H(+)(out). The catalysed reaction is a plastoquinone + NADPH + (n+1) H(+)(in) = a plastoquinol + NADP(+) + n H(+)(out). NDH-1 shuttles electrons from an unknown electron donor, via FMN and iron-sulfur (Fe-S) centers, to quinones in the respiratory and/or the photosynthetic chain. The immediate electron acceptor for the enzyme in this species is believed to be plastoquinone. Couples the redox reaction to proton translocation, and thus conserves the redox energy in a proton gradient. Cyanobacterial NDH-1 also plays a role in inorganic carbon-concentration. The chain is NAD(P)H-quinone oxidoreductase subunit M from Prochlorococcus marinus (strain AS9601).